A 288-amino-acid chain; its full sequence is MDKLIKTISESGSFRAYALDSTETVRTAQEKHNTLSSSTVALGRTLIANQILAANQKGDSKITVKVIGNGSFGHIISVADTKGHVKGYIQNPGVDIKKTATGEVLVGPFMGQGQFVSIIDYGTGNPYTSSTPLISGEIGEDFAYYLTESEQTPSAVGLNVLLDKEDKVKVAGGFMLQVLPGASEEEIARYEKRIQEMPAISTLLESDDHIEALLNAIYGDEPFKRLSEEELSFECDCSRERFENALLTLGKDELQAIKDEDHGAEIVCQFCQTKYEFSEADLEELIND.

Intrachain disulfides connect C235-C237 and C268-C271.

Belongs to the HSP33 family. Post-translationally, under oxidizing conditions two disulfide bonds are formed involving the reactive cysteines. Under reducing conditions zinc is bound to the reactive cysteines and the protein is inactive.

Its subcellular location is the cytoplasm. Redox regulated molecular chaperone. Protects both thermally unfolding and oxidatively damaged proteins from irreversible aggregation. Plays an important role in the bacterial defense system toward oxidative stress. This is 33 kDa chaperonin from Streptococcus thermophilus (strain CNRZ 1066).